We begin with the raw amino-acid sequence, 224 residues long: UPF0758 protein Patl_0046 (224 aa).

The MPN domain maps to 102–224 (VFNSAQQTKH…AVSFAERGLI (123 aa)). Zn(2+) is bound by residues His173, His175, and Asp186. The JAMM motif signature appears at 173–186 (HNHPSGVAEPSQAD).

This sequence belongs to the UPF0758 family.

The polypeptide is UPF0758 protein Patl_0046 (Pseudoalteromonas atlantica (strain T6c / ATCC BAA-1087)).